Reading from the N-terminus, the 104-residue chain is Co-chaperonin GroES 2 (104 aa).

The protein belongs to the GroES chaperonin family. In terms of assembly, heptamer of 7 subunits arranged in a ring. Interacts with the chaperonin GroEL.

The protein localises to the cytoplasm. Together with the chaperonin GroEL, plays an essential role in assisting protein folding. The GroEL-GroES system forms a nano-cage that allows encapsulation of the non-native substrate proteins and provides a physical environment optimized to promote and accelerate protein folding. GroES binds to the apical surface of the GroEL ring, thereby capping the opening of the GroEL channel. The chain is Co-chaperonin GroES 2 from Bradyrhizobium diazoefficiens (strain JCM 10833 / BCRC 13528 / IAM 13628 / NBRC 14792 / USDA 110).